A 1176-amino-acid chain; its full sequence is DNA-directed RNA polymerase subunit beta (1176 aa).

Polar residues predominate over residues T13 to V30. The segment at T13–N35 is disordered.

The protein belongs to the RNA polymerase beta chain family. The RNAP catalytic core consists of 2 alpha, 1 beta, 1 beta' and 1 omega subunit. When a sigma factor is associated with the core the holoenzyme is formed, which can initiate transcription.

The enzyme catalyses RNA(n) + a ribonucleoside 5'-triphosphate = RNA(n+1) + diphosphate. Functionally, DNA-dependent RNA polymerase catalyzes the transcription of DNA into RNA using the four ribonucleoside triphosphates as substrates. This chain is DNA-directed RNA polymerase subunit beta, found in Mycobacterium ulcerans (strain Agy99).